A 521-amino-acid chain; its full sequence is Bifunctional purine biosynthesis protein PurH (521 aa).

The 145-residue stretch at 1–145 (MIKQALISVS…KNHKDVIVIC (145 aa)) folds into the MGS-like domain.

The protein belongs to the PurH family.

It catalyses the reaction (6R)-10-formyltetrahydrofolate + 5-amino-1-(5-phospho-beta-D-ribosyl)imidazole-4-carboxamide = 5-formamido-1-(5-phospho-D-ribosyl)imidazole-4-carboxamide + (6S)-5,6,7,8-tetrahydrofolate. It carries out the reaction IMP + H2O = 5-formamido-1-(5-phospho-D-ribosyl)imidazole-4-carboxamide. It participates in purine metabolism; IMP biosynthesis via de novo pathway; 5-formamido-1-(5-phospho-D-ribosyl)imidazole-4-carboxamide from 5-amino-1-(5-phospho-D-ribosyl)imidazole-4-carboxamide (10-formyl THF route): step 1/1. The protein operates within purine metabolism; IMP biosynthesis via de novo pathway; IMP from 5-formamido-1-(5-phospho-D-ribosyl)imidazole-4-carboxamide: step 1/1. In Janthinobacterium sp. (strain Marseille) (Minibacterium massiliensis), this protein is Bifunctional purine biosynthesis protein PurH.